Consider the following 323-residue polypeptide: Lipoyl synthase (323 aa).

The [4Fe-4S] cluster site is built by Cys-69, Cys-74, Cys-80, Cys-95, Cys-99, Cys-102, and Ser-310. Residues 81–299 (WTHGTLTVMI…EAWGYELGFR (219 aa)) form the Radical SAM core domain.

Belongs to the radical SAM superfamily. Lipoyl synthase family. [4Fe-4S] cluster serves as cofactor.

The protein resides in the cytoplasm. It carries out the reaction [[Fe-S] cluster scaffold protein carrying a second [4Fe-4S](2+) cluster] + N(6)-octanoyl-L-lysyl-[protein] + 2 oxidized [2Fe-2S]-[ferredoxin] + 2 S-adenosyl-L-methionine + 4 H(+) = [[Fe-S] cluster scaffold protein] + N(6)-[(R)-dihydrolipoyl]-L-lysyl-[protein] + 4 Fe(3+) + 2 hydrogen sulfide + 2 5'-deoxyadenosine + 2 L-methionine + 2 reduced [2Fe-2S]-[ferredoxin]. It participates in protein modification; protein lipoylation via endogenous pathway; protein N(6)-(lipoyl)lysine from octanoyl-[acyl-carrier-protein]: step 2/2. Catalyzes the radical-mediated insertion of two sulfur atoms into the C-6 and C-8 positions of the octanoyl moiety bound to the lipoyl domains of lipoate-dependent enzymes, thereby converting the octanoylated domains into lipoylated derivatives. This is Lipoyl synthase from Thermus thermophilus (strain ATCC 27634 / DSM 579 / HB8).